The sequence spans 257 residues: UPF0246 protein Shal_1126 (257 aa).

Belongs to the UPF0246 family.

This Shewanella halifaxensis (strain HAW-EB4) protein is UPF0246 protein Shal_1126.